The primary structure comprises 89 residues: UPF0237 protein CA_C0478 (89 aa).

Residues 4 to 78 enclose the ACT domain; sequence IITVIGKDKV…KKLGVSIKIQ (75 aa).

The protein belongs to the UPF0237 family.

This chain is UPF0237 protein CA_C0478, found in Clostridium acetobutylicum (strain ATCC 824 / DSM 792 / JCM 1419 / IAM 19013 / LMG 5710 / NBRC 13948 / NRRL B-527 / VKM B-1787 / 2291 / W).